The following is a 496-amino-acid chain: MFS transporter cpaT (496 aa).

Positions 1-45 (MGHQEEPPRICKTPSGHEQGEGPAEKTSKPSTEEVGWDGPTDPAR) are disordered. Residues 18–32 (EQGEGPAEKTSKPST) are compositionally biased toward basic and acidic residues. An N-linked (GlcNAc...) asparagine glycan is attached at asparagine 48. A helical membrane pass occupies residues 58–78 (MGIISYLTFLTPLTSSIVAPA). N-linked (GlcNAc...) asparagine glycosylation occurs at asparagine 90. The next 5 membrane-spanning stretches (helical) occupy residues 93 to 113 (LASF…LFLA), 130 to 150 (FIFT…ALLV), 154 to 174 (FAGI…ADMF), 180 to 200 (GVAM…GPIA), and 212 to 232 (WVFW…LFVL). N-linked (GlcNAc...) asparagine glycosylation is present at asparagine 252. A run of 6 helical transmembrane segments spans residues 288–308 (VALF…LFTT), 325–345 (GLVY…FGAL), 367–387 (LPPL…YGWS), 395–415 (IMPI…LLPI), 427–449 (AASA…PLAG), and 463–483 (SLLG…YFYG).

The protein belongs to the major facilitator superfamily.

It localises to the membrane. Its function is as follows. MFS transporter; part of the gene cluster that mediates the biosynthesis of the fungal neurotoxin cyclopiazonic acid (CPA), a nanomolar inhibitor of Ca(2+)-ATPase with a unique pentacyclic indole tetramic acid scaffold. In Aspergillus oryzae (Yellow koji mold), this protein is MFS transporter cpaT.